A 196-amino-acid polypeptide reads, in one-letter code: Large ribosomal subunit protein bL25 (196 aa).

It belongs to the bacterial ribosomal protein bL25 family. CTC subfamily. Part of the 50S ribosomal subunit; part of the 5S rRNA/L5/L18/L25 subcomplex. Contacts the 5S rRNA. Binds to the 5S rRNA independently of L5 and L18.

In terms of biological role, this is one of the proteins that binds to the 5S RNA in the ribosome where it forms part of the central protuberance. The chain is Large ribosomal subunit protein bL25 from Amoebophilus asiaticus (strain 5a2).